The sequence spans 300 residues: Peptidyl-prolyl cis-trans isomerase E (300 aa).

The RRM domain maps to 6–84 (RTIYVGGLAD…RTIRVNLAKP (79 aa)). A PPIase cyclophilin-type domain is found at 142–298 (FFDIRIGGND…QKIVIYSCGE (157 aa)).

It belongs to the cyclophilin-type PPIase family. PPIase E subfamily.

Its subcellular location is the nucleus. It catalyses the reaction [protein]-peptidylproline (omega=180) = [protein]-peptidylproline (omega=0). In terms of biological role, PPIases accelerate the folding of proteins. It catalyzes the cis-trans isomerization of proline imidic peptide bonds in oligopeptides. Combines RNA-binding and PPIase activities. The sequence is that of Peptidyl-prolyl cis-trans isomerase E (cyp33) from Drosophila melanogaster (Fruit fly).